Reading from the N-terminus, the 338-residue chain is UDP-3-O-acylglucosamine N-acyltransferase (338 aa).

His-251 (proton acceptor) is an active-site residue.

This sequence belongs to the transferase hexapeptide repeat family. LpxD subfamily. As to quaternary structure, homotrimer.

The enzyme catalyses a UDP-3-O-[(3R)-3-hydroxyacyl]-alpha-D-glucosamine + a (3R)-hydroxyacyl-[ACP] = a UDP-2-N,3-O-bis[(3R)-3-hydroxyacyl]-alpha-D-glucosamine + holo-[ACP] + H(+). It participates in bacterial outer membrane biogenesis; LPS lipid A biosynthesis. Functionally, catalyzes the N-acylation of UDP-3-O-acylglucosamine using 3-hydroxyacyl-ACP as the acyl donor. Is involved in the biosynthesis of lipid A, a phosphorylated glycolipid that anchors the lipopolysaccharide to the outer membrane of the cell. In Psychrobacter arcticus (strain DSM 17307 / VKM B-2377 / 273-4), this protein is UDP-3-O-acylglucosamine N-acyltransferase.